Consider the following 228-residue polypeptide: Small ribosomal subunit protein uS3 (228 aa).

One can recognise a KH type-2 domain in the interval 39-107; that stretch reads VREYLQDKLK…PVHINIEEIR (69 aa).

The protein belongs to the universal ribosomal protein uS3 family. As to quaternary structure, part of the 30S ribosomal subunit. Forms a tight complex with proteins S10 and S14.

Binds the lower part of the 30S subunit head. Binds mRNA in the 70S ribosome, positioning it for translation. The chain is Small ribosomal subunit protein uS3 from Stutzerimonas stutzeri (strain A1501) (Pseudomonas stutzeri).